A 203-amino-acid polypeptide reads, in one-letter code: Holliday junction branch migration complex subunit RuvA (203 aa).

Residues M1–I64 form a domain I region. The tract at residues G65–A143 is domain II. The segment at L144 to G154 is flexible linker. The interval Q155–I203 is domain III.

This sequence belongs to the RuvA family. As to quaternary structure, homotetramer. Forms an RuvA(8)-RuvB(12)-Holliday junction (HJ) complex. HJ DNA is sandwiched between 2 RuvA tetramers; dsDNA enters through RuvA and exits via RuvB. An RuvB hexamer assembles on each DNA strand where it exits the tetramer. Each RuvB hexamer is contacted by two RuvA subunits (via domain III) on 2 adjacent RuvB subunits; this complex drives branch migration. In the full resolvosome a probable DNA-RuvA(4)-RuvB(12)-RuvC(2) complex forms which resolves the HJ.

It localises to the cytoplasm. In terms of biological role, the RuvA-RuvB-RuvC complex processes Holliday junction (HJ) DNA during genetic recombination and DNA repair, while the RuvA-RuvB complex plays an important role in the rescue of blocked DNA replication forks via replication fork reversal (RFR). RuvA specifically binds to HJ cruciform DNA, conferring on it an open structure. The RuvB hexamer acts as an ATP-dependent pump, pulling dsDNA into and through the RuvAB complex. HJ branch migration allows RuvC to scan DNA until it finds its consensus sequence, where it cleaves and resolves the cruciform DNA. The sequence is that of Holliday junction branch migration complex subunit RuvA from Pseudomonas fluorescens (strain SBW25).